Reading from the N-terminus, the 309-residue chain is Elongation factor Ts (309 aa).

The segment at T82 to V85 is involved in Mg(2+) ion dislocation from EF-Tu.

The protein belongs to the EF-Ts family.

It is found in the cytoplasm. In terms of biological role, associates with the EF-Tu.GDP complex and induces the exchange of GDP to GTP. It remains bound to the aminoacyl-tRNA.EF-Tu.GTP complex up to the GTP hydrolysis stage on the ribosome. The protein is Elongation factor Ts of Rickettsia felis (strain ATCC VR-1525 / URRWXCal2) (Rickettsia azadi).